The sequence spans 402 residues: CCA-adding enzyme (402 aa).

Positions 32 and 35 each coordinate ATP. CTP-binding residues include Gly32 and Arg35. Mg(2+)-binding residues include Asp45 and Asp47. Residues Arg116, Asp159, Arg162, Arg165, and Arg168 each contribute to the ATP site. Arg116, Asp159, Arg162, Arg165, and Arg168 together coordinate CTP.

The protein belongs to the tRNA nucleotidyltransferase/poly(A) polymerase family. Bacterial CCA-adding enzyme type 3 subfamily. As to quaternary structure, homodimer. Mg(2+) is required as a cofactor.

It carries out the reaction a tRNA precursor + 2 CTP + ATP = a tRNA with a 3' CCA end + 3 diphosphate. The catalysed reaction is a tRNA with a 3' CCA end + 2 CTP + ATP = a tRNA with a 3' CCACCA end + 3 diphosphate. Functionally, catalyzes the addition and repair of the essential 3'-terminal CCA sequence in tRNAs without using a nucleic acid template. Adds these three nucleotides in the order of C, C, and A to the tRNA nucleotide-73, using CTP and ATP as substrates and producing inorganic pyrophosphate. tRNA 3'-terminal CCA addition is required both for tRNA processing and repair. Also involved in tRNA surveillance by mediating tandem CCA addition to generate a CCACCA at the 3' terminus of unstable tRNAs. While stable tRNAs receive only 3'-terminal CCA, unstable tRNAs are marked with CCACCA and rapidly degraded. The protein is CCA-adding enzyme of Streptococcus pyogenes serotype M3 (strain ATCC BAA-595 / MGAS315).